The chain runs to 542 residues: 1,3-beta-glucanosyltransferase gas1 (542 aa).

The N-terminal stretch at 1–19 is a signal peptide; that stretch reads MKFSILSLAVAGLVGLAKA. Residue Asn-35 is glycosylated (N-linked (GlcNAc...) asparagine). An intrachain disulfide couples Cys-70 to Cys-99. Tyr-88 contributes to the (1,3-beta-D-glucosyl)n binding site. A glycan (N-linked (GlcNAc...) asparagine) is linked at Asn-91. Residues Asn-156 and Glu-157 each contribute to the (1,3-beta-D-glucosyl)n site. The active-site Proton donor is Glu-157. Asn-161 carries N-linked (GlcNAc...) asparagine glycosylation. (1,3-beta-D-glucosyl)n contacts are provided by Asp-198 and Arg-203. Cystine bridges form between Cys-212/Cys-345, Cys-230/Cys-261, Cys-367/Cys-419, Cys-376/Cys-439, and Cys-395/Cys-400. The N-linked (GlcNAc...) asparagine glycan is linked to Asn-249. Glu-258 serves as the catalytic Nucleophile. The N-linked (GlcNAc...) asparagine glycan is linked to Asn-279. Tyr-290 lines the (1,3-beta-D-glucosyl)n pocket. N-linked (GlcNAc...) asparagine glycosylation is found at Asn-406, Asn-484, Asn-502, and Asn-509. Positions 490 to 515 are disordered; it reads MSTSYTSGSGSSNSSGSSSNSSSKSS. The GPI-anchor amidated serine moiety is linked to residue Ser-516. A propeptide spans 517-542 (removed in mature form); the sequence is GASSYNLNMVITFLSVVIGGTAVLFI.

It belongs to the glycosyl hydrolase 72 family. In terms of processing, the GPI-anchor is attached to the protein in the endoplasmic reticulum and serves to target the protein to the cell surface. There, the glucosamine-inositol phospholipid moiety is cleaved off and the GPI-modified mannoprotein is covalently attached via its lipidless GPI glycan remnant to the 1,6-beta-glucan of the outer cell wall layer.

The protein resides in the secreted. It localises to the cell wall. The protein localises to the membrane. Its function is as follows. Splits internally a 1,3-beta-glucan molecule and transfers the newly generated reducing end (the donor) to the non-reducing end of another 1,3-beta-glucan molecule (the acceptor) forming a 1,3-beta linkage, resulting in the elongation of 1,3-beta-glucan chains in the cell wall. This is 1,3-beta-glucanosyltransferase gas1 (gas1) from Schizosaccharomyces pombe (strain 972 / ATCC 24843) (Fission yeast).